A 204-amino-acid chain; its full sequence is Peptide deformylase (204 aa).

Fe cation is bound by residues cysteine 131 and histidine 174. Glutamate 175 is an active-site residue. A Fe cation-binding site is contributed by histidine 178.

This sequence belongs to the polypeptide deformylase family. Fe(2+) is required as a cofactor.

The catalysed reaction is N-terminal N-formyl-L-methionyl-[peptide] + H2O = N-terminal L-methionyl-[peptide] + formate. Functionally, removes the formyl group from the N-terminal Met of newly synthesized proteins. Requires at least a dipeptide for an efficient rate of reaction. N-terminal L-methionine is a prerequisite for activity but the enzyme has broad specificity at other positions. This chain is Peptide deformylase, found in Streptococcus mutans serotype c (strain ATCC 700610 / UA159).